Reading from the N-terminus, the 351-residue chain is MNSLANNNKLSTEDEEIHSARKRGYNEEQNYSEARKKQRDQGLLSQESNDGNIDSALLSEGATLKGTQSQYESGLTSNKDEKGSDDEDASVAEAAVAATVNYTDLIQGQEDSSDAHTSNQTNANGEHKDSLNGERAITPSNEGVKPNTSLEGMTSSPMESTQQSKNDMLIPLAEHDRGPEHQQDDEDNDDADIDLKKDISMQPGRRGRKPTTLATTDEWKKQRKDSHKEVERRRRENINTAINVLSDLLPVRESSKAAILACAAEYIQKLKETDEANIEKWTLQKLLSEQNASQLASANEKLQEELGNAYKEIEYMKRVLRKEGIEYEDMHTHKKQENERKSTRSDNPHEA.

Methionine 1 bears the N-acetylmethionine mark. Composition is skewed to polar residues over residues 1-10 (MNSLANNNKL), 43-52 (LLSQESNDGN), and 65-77 (KGTQSQYESGLTS). Disordered stretches follow at residues 1-164 (MNSL…TQQS), 196-233 (KKDISMQPGRRGRKPTTLATTDEWKKQRKDSHKEVERR), and 327-351 (YEDMHTHKKQENERKSTRSDNPHEA). At serine 45 the chain carries Phosphoserine; by ATM or ATR. Phosphoserine is present on serine 48. Serine 84 is modified (phosphoserine). Composition is skewed to polar residues over residues 100-124 (VNYTDLIQGQEDSSDAHTSNQTNAN) and 138-164 (TPSNEGVKPNTSLEGMTSSPMESTQQS). Threonine 138 carries the phosphothreonine modification. A bHLH domain is found at 222-270 (QRKDSHKEVERRRRENINTAINVLSDLLPVRESSKAAILACAAEYIQKL).

As to quaternary structure, binds DNA as a dimer. Associates with MET4 to form a heteromeric complex which also includes MET28.

The protein localises to the nucleus. Its subcellular location is the mitochondrion. It is found in the chromosome. It localises to the centromere. Functionally, required for chromosome stability and methionine prototrophy. It is involved in chromosomal segregation. Binds to a highly conserved DNA sequence (5'-RTCACRTG-3'), called CDEI, found in centromeres and in several promoters. DNA-binding activity is enhanced by MET28. Required as an auxiliary factor for transcriptional activation of sulfur metabolism together with MET4 and MET28. This Saccharomyces cerevisiae (strain ATCC 204508 / S288c) (Baker's yeast) protein is Centromere-binding protein 1 (CBF1).